A 301-amino-acid polypeptide reads, in one-letter code: uncharacterized protein (301 aa).

Belongs to the asfivirus E301R family. As to quaternary structure, interacts with host IRF3.

Functionally, plays a role in the inhibition of host innate immune system by acting as a negatively regulator of type I interferon production. Mechanistically, interacts with and prevents host IRF3 nuclear localization to inhibit its transcriptional activity. This is an uncharacterized protein from African swine fever virus (isolate Warthog/Namibia/Wart80/1980) (ASFV).